The chain runs to 480 residues: UDP-glucose 6-dehydrogenase 4 (480 aa).

Residues 3–20 (KICC…MAVI), Asp33, Arg38, Thr90, Thr128, and Glu161 each bind NAD(+). Substrate is bound by residues 157 to 161 (EFLAE), Lys216, 216 to 223 (KLAANAFL), 256 to 269 (RIGS…VGFG), and Gly269. Catalysis depends on Cys272, which acts as the Nucleophile. NAD(+) is bound at residue Lys275. Residues Phe334 and Lys335 each contribute to the substrate site. Residue Arg342 participates in NAD(+) binding. A substrate-binding site is contributed by Arg447.

This sequence belongs to the UDP-glucose/GDP-mannose dehydrogenase family.

It catalyses the reaction UDP-alpha-D-glucose + 2 NAD(+) + H2O = UDP-alpha-D-glucuronate + 2 NADH + 3 H(+). The protein operates within nucleotide-sugar biosynthesis; UDP-alpha-D-glucuronate biosynthesis; UDP-alpha-D-glucuronate from UDP-alpha-D-glucose: step 1/1. With respect to regulation, inhibited by UDP-xylose. In terms of biological role, involved in the biosynthesis of UDP-glucuronic acid (UDP-GlcA), providing nucleotide sugars for cell-wall polymers. The polypeptide is UDP-glucose 6-dehydrogenase 4 (Arabidopsis thaliana (Mouse-ear cress)).